The chain runs to 185 residues: MSPFAVVLLAFSMSVDAFAVSVGRGAALGRPRYSEALRSGAVFGVVEAITPVIGWVAGVAASSFVQAVDHWLAFGLLAAVGLHMLYAAVWKKADAKPVGRSFTVLMATAIGTSLDAMAVGVSLAFLNVNIVVVATAIGLATFLMSSGGMLIGRLIGEHFGRIAEAVAGIALFGLGLSILIEHLTA.

The next 6 helical transmembrane spans lie at Pro-3–Gly-23, Ala-41–Ala-61, His-70–Trp-90, Ser-101–Val-121, Leu-123–Leu-143, and Ala-165–Ala-185.

Belongs to the MntP (TC 9.B.29) family.

The protein resides in the cell inner membrane. Its function is as follows. Probably functions as a manganese efflux pump. This is Putative manganese efflux pump MntP from Bradyrhizobium sp. (strain BTAi1 / ATCC BAA-1182).